The sequence spans 131 residues: Global transcriptional regulator Spx (131 aa).

A disulfide bridge connects residues cysteine 10 and cysteine 13.

The protein belongs to the ArsC family. Spx subfamily. Interacts with the C-terminal domain of the alpha subunit of the RNAP.

The protein resides in the cytoplasm. Under non-stress conditions, Spx is degraded by ClpXP. Efficient degradation by ClpXP requires the adapter protein SpxH/YjbH. Function, levels and solubility of Spx are affected by SpxH/YjbH aggregation and stress conditions. Its function is as follows. Global transcriptional regulator that plays a key role in stress response and exerts either positive or negative regulation of genes. Acts by interacting with the C-terminal domain of the alpha subunit of the RNA polymerase (RNAP). This interaction can enhance binding of RNAP to the promoter region of target genes and stimulate their transcription, or block interaction of RNAP with activator proteins and repress transcription. Functionally, required for transcription of thioredoxin reductase (trxB). Modulates the expression of icaR, encoding a repressor of the biofilm operon icaADBC. Also controls the transcription of trfA, a gene implicated in cell wall antibiotic resistance, which in turn is required for degradation of MazE antitoxin, the unstable component of the MazEF toxin-antitoxin system, that neutralizes the endoribonuclease activity of MazF toxin. The polypeptide is Global transcriptional regulator Spx (Staphylococcus aureus (strain NCTC 8325 / PS 47)).